Consider the following 277-residue polypeptide: 5'-nucleotidase SurE (277 aa).

A divalent metal cation is bound by residues Asp16, Asp17, Ser48, and Asn101.

This sequence belongs to the SurE nucleotidase family. The cofactor is a divalent metal cation.

The protein localises to the cytoplasm. It carries out the reaction a ribonucleoside 5'-phosphate + H2O = a ribonucleoside + phosphate. Nucleotidase that shows phosphatase activity on nucleoside 5'-monophosphates. This is 5'-nucleotidase SurE from Parvibaculum lavamentivorans (strain DS-1 / DSM 13023 / NCIMB 13966).